The sequence spans 219 residues: Casparian strip membrane protein 3 (219 aa).

The interval 1–43 (MDPGREDEVPLAATSPESRRTRSNGRGKATVGDAPPPAETVVS) is disordered. At 1–57 (MDPGREDEVPLAATSPESRRTRSNGRGKATVGDAPPPAETVVSTKAAPLPTGGWKKG) the chain is on the cytoplasmic side. A helical transmembrane segment spans residues 58–78 (IAILDFILRLGAIGAAMGASI). Residues 79 to 108 (LMGTNEQILPFFTQFLQFHAQWDDFPVFKL) lie on the Extracellular side of the membrane. A helical membrane pass occupies residues 109-129 (FVVLNALAGGFLILSLPLSIV). Residues 130-147 (CIVRPLAVGPRFLLLITD) lie on the Cytoplasmic side of the membrane. Residues 148–168 (LVNMATVIAAASAAAAIVYVA) traverse the membrane as a helical segment. At 169-193 (HNGSQDANWIAICQQFTDFCQGTSE) the chain is on the extracellular side. Residue N170 is glycosylated (N-linked (GlcNAc...) asparagine). The chain crosses the membrane as a helical span at residues 194–214 (AVVVSFVAAVFLVCLIVVSTL). Residues 215 to 219 (ALKRT) are Cytoplasmic-facing.

This sequence belongs to the Casparian strip membrane proteins (CASP) family. As to quaternary structure, homodimer and heterodimers.

Its subcellular location is the cell membrane. Its function is as follows. Regulates membrane-cell wall junctions and localized cell wall deposition. Required for establishment of the Casparian strip membrane domain (CSD) and the subsequent formation of Casparian strips, a cell wall modification of the root endodermis that determines an apoplastic barrier between the intraorganismal apoplasm and the extraorganismal apoplasm and prevents lateral diffusion. This is Casparian strip membrane protein 3 from Lotus japonicus (Lotus corniculatus var. japonicus).